The chain runs to 337 residues: Transcription factor HBI1 (337 aa).

Residues 119–180 (VALKNKRKPE…SKGASENQKL (62 aa)) form a disordered region. Residues 126–151 (KPEVKTREEQKTEKKIKVEAETESSM) are compositionally biased toward basic and acidic residues. Positions 152 to 165 (KGKSNMGNTEASSD) are enriched in polar residues. The bHLH domain maps to 191–241 (QATDRHSLAERARREKISKKMKYLQDIVPGCNKVTGKAGMLDEIINYVQCL).

Homodimer. Interacts with IBH1. As to expression, highly expressed in hypocotyls and cotyledons. Expressed in leaves, stems, and flowers.

The protein resides in the nucleus. Atypical bHLH transcription factor that acts as a positive regulator of cell elongation downstream of multiple external and endogenous signals by direct binding to the promoters and activation of the two expansin genes EXPA1 and EXPA8, encoding cell wall loosening enzymes. Transcriptional activity is inhibited when binding to the bHLH transcription factor IBH1. The chain is Transcription factor HBI1 (HBI1) from Arabidopsis thaliana (Mouse-ear cress).